The sequence spans 282 residues: Biotin synthase (282 aa).

A Radical SAM core domain is found at 1 to 228 (MQEIFLCSIS…NARLMVAGGR (228 aa)). Residues cysteine 17, cysteine 21, and cysteine 24 each coordinate [4Fe-4S] cluster. [2Fe-2S] cluster contacts are provided by cysteine 61, cysteine 96, cysteine 154, and arginine 221.

This sequence belongs to the radical SAM superfamily. Biotin synthase family. Homodimer. It depends on [4Fe-4S] cluster as a cofactor. Requires [2Fe-2S] cluster as cofactor.

The enzyme catalyses (4R,5S)-dethiobiotin + (sulfur carrier)-SH + 2 reduced [2Fe-2S]-[ferredoxin] + 2 S-adenosyl-L-methionine = (sulfur carrier)-H + biotin + 2 5'-deoxyadenosine + 2 L-methionine + 2 oxidized [2Fe-2S]-[ferredoxin]. Its pathway is cofactor biosynthesis; biotin biosynthesis; biotin from 7,8-diaminononanoate: step 2/2. Its function is as follows. Catalyzes the conversion of dethiobiotin (DTB) to biotin by the insertion of a sulfur atom into dethiobiotin via a radical-based mechanism. The polypeptide is Biotin synthase (Helicobacter pylori (strain Shi470)).